We begin with the raw amino-acid sequence, 839 residues long: Protein translocase subunit SecA (839 aa).

ATP-binding positions include glutamine 86, 104-108 (GEGKT), and aspartate 493. The tract at residues 794–839 (GIDMDNLQTSGPSDRPDPETSGDADPKNRAQRRAQEQERKRQNKKQ) is disordered. Residues 807-833 (DRPDPETSGDADPKNRAQRRAQEQERK) are compositionally biased toward basic and acidic residues.

Belongs to the SecA family. In terms of assembly, monomer and homodimer. Part of the essential Sec protein translocation apparatus which comprises SecA, SecYEG and auxiliary proteins SecDF. Other proteins may also be involved.

The protein localises to the cell membrane. It localises to the cytoplasm. The enzyme catalyses ATP + H2O + cellular proteinSide 1 = ADP + phosphate + cellular proteinSide 2.. In terms of biological role, part of the Sec protein translocase complex. Interacts with the SecYEG preprotein conducting channel. Has a central role in coupling the hydrolysis of ATP to the transfer of proteins into and across the cell membrane, serving as an ATP-driven molecular motor driving the stepwise translocation of polypeptide chains across the membrane. This chain is Protein translocase subunit SecA, found in Brevibacillus brevis (strain 47 / JCM 6285 / NBRC 100599).